A 280-amino-acid chain; its full sequence is 2-dehydro-3-deoxyphosphooctonate aldolase (280 aa).

Belongs to the KdsA family.

The protein resides in the cytoplasm. It catalyses the reaction D-arabinose 5-phosphate + phosphoenolpyruvate + H2O = 3-deoxy-alpha-D-manno-2-octulosonate-8-phosphate + phosphate. Its pathway is carbohydrate biosynthesis; 3-deoxy-D-manno-octulosonate biosynthesis; 3-deoxy-D-manno-octulosonate from D-ribulose 5-phosphate: step 2/3. It participates in bacterial outer membrane biogenesis; lipopolysaccharide biosynthesis. This chain is 2-dehydro-3-deoxyphosphooctonate aldolase, found in Neisseria gonorrhoeae (strain NCCP11945).